The following is a 1996-amino-acid chain: MMRTTEDFHKPSATLNSNTATKGRYIYLEAFLEGGAPWGFTLKGGLEHGEPLIISKVEEGGKADTLSSKLQAGDEVVHINEVTLSSSRKEAVSLVKGSYKTLRLVVRRDVCTDPGHADTGASNFVSPEHLTSGPQHRKAAWSGGVKLRLKHRRSEPAGRPHSWHTTKSGEKQPDASMMQISQGMIGPPWHQSYHSSSSTSDLSNYDHAYLRRSPDQCSSQGSMESLEPSGAYPPCHLSPAKSTGSIDQLSHFHNKRDSAYSSFSTSSSILEYPHPGISGRERSGSMDNTSARGGLLEGMRQADIRYVKTVYDTRRGVSAEYEVNSSALLLQGREARASANGQGYDKWSNIPRGKGVPPPSWSQQCPSSLETATDNLPPKVGAPLPPARSDSYAAFRHRERPSSWSSLDQKRLCRPQANSLGSLKSPFIEEQLHTVLEKSPENSPPVKPKHNYTQKAQPGQPLLPTSIYPVPSLEPHFAQVPQPSVSSNGMLYPALAKESGYIAPQGACNKMATIDENGNQNGSGRPGFAFCQPLEHDLLSPVEKKPEATAKYVPSKVHFCSVPENEEDASLKRHLTPPQGNSPHSNERKSTHSNKPSSHPHSLKCPQAQAWQAGEDKRSSRLSEPWEGDFQEDHNANLWRRLEREGLGQSLSGNFGKTKSAFSSLQNIPESLRRHSSLELGRGTQEGYPGGRPTCAVNTKAEDPGRKAAPDLGSHLDRQVSYPRPEGRTGASASFNSTDPSPEEPPAPSHPHTSSLGRRGPGPGSASALQGFQYGKPHCSVLEKVSKFEQREQGSQRPSVGGSGFGHNYRPHRTVSTSSTSGNDFEETKAHIRFSESAEPLGNGEQHFKNGELKLEEASRQPCGQQLSGGASDSGRGPQRPDARLLRSQSTFQLSSEPEREPEWRDRPGSPESPLLDAPFSRAYRNSIKDAQSRVLGATSFRRRDLELGAPVASRSWRPRPSSAHVGLRSPEASASASPHTPRERHSVTPAEGDLARPVPPAARRGARRRLTPEQKKRSYSEPEKMNEVGIVEEAEPAPLGPQRNGMRFPESSVADRRRLFERDGKACSTLSLSGPELKQFQQSALADYIQRKTGKRPTSAAGCSLQEPGPLRERAQSAYLQPGPAALEGSGLASASSLSSLREPSLQPRREATLLPATVAETQQAPRDRSSSFAGGRRLGERRRGDLLSGANGGTRGTQRGDETPREPSSWGARAGKSMSAEDLLERSDVLAGPVHVRSRSSPATADKRQDVLLGQDSGFGLVKDPCYLAGPGSRSLSCSERGQEEMLPLFHHLTPRWGGSGCKAIGDSSVPSECPGTLDHQRQASRTPCPRPPLAGTQGLVTDTRAAPLTPIGTPLPSAIPSGYCSQDGQTGRQPLPPYTPAMMHRSNGHTLTQPPGPRGCEGDGPEHGVEEGTRKRVSLPQWPPPSRAKWAHAAREDSLPEESSAPDFANLKHYQKQQSLPSLCSTSDPDTPLGAPSTPGRISLRISESVLRDSPPPHEDYEDEVFVRDPHPKATSSPTFEPLPPPPPPPPSQETPVYSMDDFPPPPPHTVCEAQLDSEDPEGPRPSFNKLSKVTIARERHMPGAAHVVGSQTLASRLQTSIKGSEAESTPPSFMSVHAQLAGSLGGQPAPIQTQSLSHDPVSGTQGLEKKVSPDPQKSSEDIRTEALAKEIVHQDKSLADILDPDSRLKTTMDLMEGLFPRDVNLLKENSVKRKAIQRTVSSSGCEGKRNEDKEAVSMLVNCPAYYSVSAPKAELLNKIKEMPAEVNEEEEQADVNEKKAELIGSLTHKLETLQEAKGSLLTDIKLNNALGEEVEALISELCKPNEFDKYRMFIGDLDKVVNLLLSLSGRLARVENVLSGLGEDASNEERSSLYEKRKILAGQHEDARELKENLDRRERVVLGILANYLSEEQLQDYQHFVKMKSTLLIEQRKLDDKIKLGQEQVKCLLESLPSDFIPKAGALALPPNLTSEPIPAGGCTFSGIFPTLTSPL.

Positions 25–110 constitute a PDZ domain; the sequence is YIYLEAFLEG…TLRLVVRRDV (86 aa). A disordered region spans residues 150-173; sequence KHRRSEPAGRPHSWHTTKSGEKQP. Position 213 is a phosphoserine (serine 213). Disordered regions lie at residues 340 to 389, 437 to 468, 568 to 629, 673 to 772, and 788 to 1053; these read NGQG…PARS, EKSP…TSIY, DASL…WEGD, RRHS…LQGF, and FEQR…PESS. Phosphoserine is present on residues serine 439 and serine 443. Residues 700 to 718 show a composition bias toward basic and acidic residues; it reads KAEDPGRKAAPDLGSHLDR. Residues 750–768 are compositionally biased toward low complexity; it reads HPHTSSLGRRGPGPGSASA. Residues 814–823 are compositionally biased toward polar residues; sequence TVSTSSTSGN. Serine 816 carries the phosphoserine modification. Basic and acidic residues-rich tracts occupy residues 826-836 and 846-859; these read EETKAHIRFSE and QHFK…EEAS. Composition is skewed to polar residues over residues 862-871 and 887-896; these read PCGQQLSGGA and RSQSTFQLSS. Residue serine 890 is modified to Phosphoserine. A compositionally biased stretch (basic and acidic residues) spans 897–909; that stretch reads EPEREPEWRDRPG. Serine 910 and serine 913 each carry phosphoserine. Residues 928-1030 form the ASD1 domain; the sequence is IKDAQSRVLG…SEPEKMNEVG (103 aa). Residues 950 to 964 show a composition bias toward low complexity; the sequence is APVASRSWRPRPSSA. Serine 970 bears the Phosphoserine mark. Residues 1011–1027 show a composition bias toward basic and acidic residues; the sequence is LTPEQKKRSYSEPEKMN. Phosphoserine occurs at positions 1069 and 1072. 4 disordered regions span residues 1093–1115, 1137–1223, 1315–1573, and 1627–1665; these read KTGK…LRER, SSLS…MSAE, ECPG…SFNK, and SLGG…SSED. The segment covering 1137–1148 has biased composition (low complexity); the sequence is SSLSSLREPSLQ. Serine 1221 carries the post-translational modification Phosphoserine. Over residues 1366-1375 the composition is skewed to polar residues; it reads YCSQDGQTGR. Residues 1403–1417 show a composition bias toward basic and acidic residues; sequence CEGDGPEHGVEEGTR. A Phosphoserine modification is found at serine 1441. A compositionally biased stretch (polar residues) spans 1459-1472; sequence KQQSLPSLCSTSDP. Residues 1498-1515 show a composition bias toward basic and acidic residues; sequence PPPHEDYEDEVFVRDPHP. Over residues 1524–1536 the composition is skewed to pro residues; sequence EPLPPPPPPPPSQ. Residues 1634-1649 are compositionally biased toward polar residues; sequence PIQTQSLSHDPVSGTQ. Over residues 1651–1665 the composition is skewed to basic and acidic residues; sequence LEKKVSPDPQKSSED. Positions 1669–1957 constitute an ASD2 domain; the sequence is EALAKEIVHQ…QVKCLLESLP (289 aa).

The protein belongs to the shroom family. As to quaternary structure, interacts with F-actin. Interacts with ROCK1.

It localises to the cell junction. The protein resides in the adherens junction. Its subcellular location is the cytoplasm. It is found in the cytoskeleton. The protein localises to the apical cell membrane. Its function is as follows. Controls cell shape changes in the neuroepithelium during neural tube closure. Induces apical constriction in epithelial cells by promoting the apical accumulation of F-actin and myosin II, and probably by bundling stress fibers. Induces apicobasal cell elongation by redistributing gamma-tubulin and directing the assembly of robust apicobasal microtubule arrays. This chain is Protein Shroom3 (SHROOM3), found in Homo sapiens (Human).